We begin with the raw amino-acid sequence, 321 residues long: Lipoyl synthase (321 aa).

Residues cysteine 68, cysteine 73, cysteine 79, cysteine 94, cysteine 98, cysteine 101, and serine 308 each contribute to the [4Fe-4S] cluster site. The Radical SAM core domain maps to 80-297 (FNHGTATFMI…KAEAIAMGFT (218 aa)).

This sequence belongs to the radical SAM superfamily. Lipoyl synthase family. Requires [4Fe-4S] cluster as cofactor.

It is found in the cytoplasm. It carries out the reaction [[Fe-S] cluster scaffold protein carrying a second [4Fe-4S](2+) cluster] + N(6)-octanoyl-L-lysyl-[protein] + 2 oxidized [2Fe-2S]-[ferredoxin] + 2 S-adenosyl-L-methionine + 4 H(+) = [[Fe-S] cluster scaffold protein] + N(6)-[(R)-dihydrolipoyl]-L-lysyl-[protein] + 4 Fe(3+) + 2 hydrogen sulfide + 2 5'-deoxyadenosine + 2 L-methionine + 2 reduced [2Fe-2S]-[ferredoxin]. It participates in protein modification; protein lipoylation via endogenous pathway; protein N(6)-(lipoyl)lysine from octanoyl-[acyl-carrier-protein]: step 2/2. Functionally, catalyzes the radical-mediated insertion of two sulfur atoms into the C-6 and C-8 positions of the octanoyl moiety bound to the lipoyl domains of lipoate-dependent enzymes, thereby converting the octanoylated domains into lipoylated derivatives. This Pectobacterium carotovorum subsp. carotovorum (strain PC1) protein is Lipoyl synthase.